The chain runs to 343 residues: Phosphate acyltransferase (343 aa).

The protein belongs to the PlsX family. As to quaternary structure, homodimer. Probably interacts with PlsY.

The protein resides in the cytoplasm. The enzyme catalyses a fatty acyl-[ACP] + phosphate = an acyl phosphate + holo-[ACP]. It functions in the pathway lipid metabolism; phospholipid metabolism. Its function is as follows. Catalyzes the reversible formation of acyl-phosphate (acyl-PO(4)) from acyl-[acyl-carrier-protein] (acyl-ACP). This enzyme utilizes acyl-ACP as fatty acyl donor, but not acyl-CoA. The chain is Phosphate acyltransferase from Limosilactobacillus reuteri (strain DSM 20016) (Lactobacillus reuteri).